The primary structure comprises 212 residues: Cytidylate kinase (212 aa).

9 to 17 contacts ATP; the sequence is GPAAAGKGT.

Belongs to the cytidylate kinase family. Type 1 subfamily.

Its subcellular location is the cytoplasm. The catalysed reaction is CMP + ATP = CDP + ADP. The enzyme catalyses dCMP + ATP = dCDP + ADP. The chain is Cytidylate kinase from Sinorhizobium medicae (strain WSM419) (Ensifer medicae).